A 563-amino-acid polypeptide reads, in one-letter code: Arginine--tRNA ligase (563 aa).

The 'HIGH' region motif lies at 121 to 131 (PNIAKPFSIGH).

This sequence belongs to the class-I aminoacyl-tRNA synthetase family. Monomer.

It localises to the cytoplasm. It carries out the reaction tRNA(Arg) + L-arginine + ATP = L-arginyl-tRNA(Arg) + AMP + diphosphate. The polypeptide is Arginine--tRNA ligase (Streptococcus pyogenes serotype M12 (strain MGAS2096)).